We begin with the raw amino-acid sequence, 1615 residues long: DNA-directed RNA polymerase I subunit rpa1 (1615 aa).

Cys65, Cys68, Cys75, and His78 together coordinate Zn(2+). The segment at 155-181 (GKSNEEGEEVMESDESDSDKMDTDENK) is disordered. A compositionally biased stretch (acidic residues) spans 160 to 171 (EGEEVMESDESD). Residues 172 to 181 (SDKMDTDENK) are compositionally biased toward basic and acidic residues. The Mg(2+) site is built by Asp593, Asp595, and Asp597. The tract at residues 955–967 (PQDYFFHCMAGRE) is bridging helix. Residues 1305–1316 (DSLTINDDDAPA) show a composition bias toward acidic residues. The disordered stretch occupies residues 1305–1411 (DSLTINDDDA…NSRSSNSFSD (107 aa)). Residues 1317–1336 (NDDTTNNDENTSQQQPSSQN) show a composition bias toward low complexity. Acidic residues predominate over residues 1366-1399 (EDGEEEAEEKDSDEGESEAEESDDKSDVDSDSDE). The span at 1400 to 1411 (ISNSRSSNSFSD) shows a compositional bias: low complexity.

Belongs to the RNA polymerase beta' chain family. In terms of assembly, component of the RNA polymerase I (Pol I) complex consisting of at least 13 subunits.

The protein resides in the nucleus. It catalyses the reaction RNA(n) + a ribonucleoside 5'-triphosphate = RNA(n+1) + diphosphate. DNA-dependent RNA polymerase catalyzes the transcription of DNA into RNA using the four ribonucleoside triphosphates as substrates. Largest and catalytic core component of RNA polymerase I which synthesizes ribosomal RNA precursors. Forms the polymerase active center together with the second largest subunit. A single stranded DNA template strand of the promoter is positioned within the central active site cleft of Pol I. A bridging helix emanates from RPA1 and crosses the cleft near the catalytic site and is thought to promote translocation of Pol I by acting as a ratchet that moves the RNA-DNA hybrid through the active site by switching from straight to bent conformations at each step of nucleotide addition. This chain is DNA-directed RNA polymerase I subunit rpa1 (polr1a), found in Dictyostelium discoideum (Social amoeba).